A 95-amino-acid chain; its full sequence is CRISPR-associated endoribonuclease Cas2 3 (95 aa).

Asp7 is a Mg(2+) binding site.

It belongs to the CRISPR-associated endoribonuclease Cas2 protein family. In terms of assembly, homodimer, forms a heterotetramer with a Cas1 homodimer. The cofactor is Mg(2+).

In terms of biological role, CRISPR (clustered regularly interspaced short palindromic repeat), is an adaptive immune system that provides protection against mobile genetic elements (viruses, transposable elements and conjugative plasmids). CRISPR clusters contain sequences complementary to antecedent mobile elements and target invading nucleic acids. CRISPR clusters are transcribed and processed into CRISPR RNA (crRNA). Functions as a ssRNA-specific endoribonuclease. Involved in the integration of spacer DNA into the CRISPR cassette. This is CRISPR-associated endoribonuclease Cas2 3 from Rhodospirillum rubrum (strain ATCC 11170 / ATH 1.1.1 / DSM 467 / LMG 4362 / NCIMB 8255 / S1).